We begin with the raw amino-acid sequence, 220 residues long: Probable GTP-binding protein EngB (220 aa).

Residues 31–205 (AGVEIAFAGR…LGILNEWCHP (175 aa)) form the EngB-type G domain. GTP-binding positions include 39-46 (GRSNAGKS), 66-70 (GRTQL), 84-87 (DLPG), 151-154 (TKAD), and 184-186 (FSS). S46 and T68 together coordinate Mg(2+).

It belongs to the TRAFAC class TrmE-Era-EngA-EngB-Septin-like GTPase superfamily. EngB GTPase family. Mg(2+) serves as cofactor.

Necessary for normal cell division and for the maintenance of normal septation. The protein is Probable GTP-binding protein EngB of Shewanella sediminis (strain HAW-EB3).